The primary structure comprises 149 residues: D-aminoacyl-tRNA deacylase (149 aa).

The short motif at 137–138 is the Gly-cisPro motif, important for rejection of L-amino acids element; the sequence is GP.

Belongs to the DTD family. In terms of assembly, homodimer.

Its subcellular location is the cytoplasm. It catalyses the reaction glycyl-tRNA(Ala) + H2O = tRNA(Ala) + glycine + H(+). The enzyme catalyses a D-aminoacyl-tRNA + H2O = a tRNA + a D-alpha-amino acid + H(+). In terms of biological role, an aminoacyl-tRNA editing enzyme that deacylates mischarged D-aminoacyl-tRNAs. Also deacylates mischarged glycyl-tRNA(Ala), protecting cells against glycine mischarging by AlaRS. Acts via tRNA-based rather than protein-based catalysis; rejects L-amino acids rather than detecting D-amino acids in the active site. By recycling D-aminoacyl-tRNA to D-amino acids and free tRNA molecules, this enzyme counteracts the toxicity associated with the formation of D-aminoacyl-tRNA entities in vivo and helps enforce protein L-homochirality. In Herminiimonas arsenicoxydans, this protein is D-aminoacyl-tRNA deacylase.